A 623-amino-acid chain; its full sequence is (-)-alpha-pinene synthase 1, chloroplastic (623 aa).

The transit peptide at 1–52 (MDLISVLPSASKSCVCLHKPLSSSTHKLKPFCKTIRILGMPRRWKFAGPSMS) directs the protein to the chloroplast. Mg(2+) contacts are provided by Asp374, Asp378, and Asp526. Positions 374 to 378 (DDMYD) match the DDXXD motif motif.

This sequence belongs to the terpene synthase family. Tpsd subfamily. The cofactor is Mg(2+). Mn(2+) serves as cofactor.

The protein resides in the plastid. It is found in the chloroplast. It catalyses the reaction (2E)-geranyl diphosphate = (1S,5S)-alpha-pinene + diphosphate. The enzyme catalyses (2E)-geranyl diphosphate = (1S,5S)-beta-pinene + diphosphate. The catalysed reaction is (2E)-geranyl diphosphate = (-)-beta-phellandrene + diphosphate. Its pathway is terpene metabolism; oleoresin biosynthesis. It functions in the pathway secondary metabolite biosynthesis; terpenoid biosynthesis. Monoterpene synthase (TPS) involved in the biosynthesis of monoterpene natural products included in conifer oleoresin secretions and volatile emissions; these compounds contribute to biotic and abiotic stress defense against herbivores and pathogens. Catalyzes the conversion of (2E)-geranyl diphosphate (GPP) to (-)-alpha-pinene and (-)-beta-pinene, and, to a lower extent, to (-)-beta-phellandrene. In Pinus banksiana (Jack pine), this protein is (-)-alpha-pinene synthase 1, chloroplastic.